Consider the following 448-residue polypeptide: 3-phosphoshikimate 1-carboxyvinyltransferase (448 aa).

3-phosphoshikimate-binding residues include Lys-38, Ser-39, and Arg-43. Lys-38 is a binding site for phosphoenolpyruvate. Residues Gly-111 and Arg-140 each contribute to the phosphoenolpyruvate site. 3-phosphoshikimate is bound by residues Ser-185, Gln-187, Asp-335, and Lys-362. A phosphoenolpyruvate-binding site is contributed by Gln-187. Asp-335 (proton acceptor) is an active-site residue. Residues Arg-366 and Arg-408 each coordinate phosphoenolpyruvate.

This sequence belongs to the EPSP synthase family. In terms of assembly, monomer.

Its subcellular location is the cytoplasm. The catalysed reaction is 3-phosphoshikimate + phosphoenolpyruvate = 5-O-(1-carboxyvinyl)-3-phosphoshikimate + phosphate. Its pathway is metabolic intermediate biosynthesis; chorismate biosynthesis; chorismate from D-erythrose 4-phosphate and phosphoenolpyruvate: step 6/7. Its function is as follows. Catalyzes the transfer of the enolpyruvyl moiety of phosphoenolpyruvate (PEP) to the 5-hydroxyl of shikimate-3-phosphate (S3P) to produce enolpyruvyl shikimate-3-phosphate and inorganic phosphate. The sequence is that of 3-phosphoshikimate 1-carboxyvinyltransferase from Gloeothece citriformis (strain PCC 7424) (Cyanothece sp. (strain PCC 7424)).